The sequence spans 186 residues: Holliday junction branch migration complex subunit RuvA (186 aa).

The segment at 1 to 63 is domain I; sequence MNDYINGLLH…DNVFKYYGFK (63 aa). Residues 64-137 form a domain II region; the sequence is NQLIRDLFEL…QKELFNNKIS (74 aa). S137 is a region of interest (flexible linker). Residues 137–186 form a domain III region; it reads SDKKNKVITSLEKLGYKTKDIYKIIINIDEDMNIEDLTKYVLEQLSYLHN.

It belongs to the RuvA family. Homotetramer. Forms an RuvA(8)-RuvB(12)-Holliday junction (HJ) complex. HJ DNA is sandwiched between 2 RuvA tetramers; dsDNA enters through RuvA and exits via RuvB. An RuvB hexamer assembles on each DNA strand where it exits the tetramer. Each RuvB hexamer is contacted by two RuvA subunits (via domain III) on 2 adjacent RuvB subunits; this complex drives branch migration. In the full resolvosome a probable DNA-RuvA(4)-RuvB(12)-RuvC(2) complex forms which resolves the HJ.

The protein resides in the cytoplasm. In terms of biological role, the RuvA-RuvB-RuvC complex processes Holliday junction (HJ) DNA during genetic recombination and DNA repair, while the RuvA-RuvB complex plays an important role in the rescue of blocked DNA replication forks via replication fork reversal (RFR). RuvA specifically binds to HJ cruciform DNA, conferring on it an open structure. The RuvB hexamer acts as an ATP-dependent pump, pulling dsDNA into and through the RuvAB complex. HJ branch migration allows RuvC to scan DNA until it finds its consensus sequence, where it cleaves and resolves the cruciform DNA. The polypeptide is Holliday junction branch migration complex subunit RuvA (Mycoplasma mycoides subsp. mycoides SC (strain CCUG 32753 / NCTC 10114 / PG1)).